The sequence spans 439 residues: Xylose isomerase (439 aa).

Active-site residues include His101 and Asp104. Residues Glu232, Glu268, His271, Asp296, Asp307, Asp309, and Asp339 each coordinate Mg(2+).

The protein belongs to the xylose isomerase family. Homotetramer. It depends on Mg(2+) as a cofactor.

The protein localises to the cytoplasm. The enzyme catalyses alpha-D-xylose = alpha-D-xylulofuranose. The protein is Xylose isomerase (xylA) of Thermoanaerobacterium thermosaccharolyticum (strain ATCC 7956 / DSM 571 / NCIMB 9385 / NCA 3814 / NCTC 13789 / WDCM 00135 / 2032) (Clostridium thermosaccharolyticum).